We begin with the raw amino-acid sequence, 338 residues long: tRNA pseudouridine synthase D (338 aa).

Residue Asp79 is the Nucleophile of the active site. Residues 154–303 enclose the TRUD domain; the sequence is GVPNYFGEQR…EEAWRANILY (150 aa).

The protein belongs to the pseudouridine synthase TruD family.

It catalyses the reaction uridine(13) in tRNA = pseudouridine(13) in tRNA. Its function is as follows. Responsible for synthesis of pseudouridine from uracil-13 in transfer RNAs. The protein is tRNA pseudouridine synthase D of Legionella pneumophila (strain Lens).